We begin with the raw amino-acid sequence, 185 residues long: Ribosome-recycling factor (185 aa).

This sequence belongs to the RRF family.

Its subcellular location is the cytoplasm. Functionally, responsible for the release of ribosomes from messenger RNA at the termination of protein biosynthesis. May increase the efficiency of translation by recycling ribosomes from one round of translation to another. The protein is Ribosome-recycling factor of Corynebacterium aurimucosum (strain ATCC 700975 / DSM 44827 / CIP 107346 / CN-1) (Corynebacterium nigricans).